The primary structure comprises 104 residues: Large ribosomal subunit protein bL21c (104 aa).

This sequence belongs to the bacterial ribosomal protein bL21 family. In terms of assembly, part of the 50S ribosomal subunit.

The protein resides in the plastid. The protein localises to the chloroplast. Its function is as follows. This protein binds to 23S rRNA. This Guillardia theta (Cryptophyte) protein is Large ribosomal subunit protein bL21c.